The following is a 226-amino-acid chain: Large ribosomal subunit protein uL3 (226 aa).

Q160 is modified (N5-methylglutamine).

It belongs to the universal ribosomal protein uL3 family. As to quaternary structure, part of the 50S ribosomal subunit. Forms a cluster with proteins L14 and L19. Methylated by PrmB.

Its function is as follows. One of the primary rRNA binding proteins, it binds directly near the 3'-end of the 23S rRNA, where it nucleates assembly of the 50S subunit. In Leptothrix cholodnii (strain ATCC 51168 / LMG 8142 / SP-6) (Leptothrix discophora (strain SP-6)), this protein is Large ribosomal subunit protein uL3.